A 400-amino-acid polypeptide reads, in one-letter code: Mu-type opioid receptor (400 aa).

At 1 to 68 (MDSSAAPTNA…CPPTGSPSMI (68 aa)) the chain is on the extracellular side. N-linked (GlcNAc...) asparagine glycans are attached at residues asparagine 9, asparagine 12, asparagine 33, asparagine 40, and asparagine 48. Residues 69 to 93 (TAITIMALYSIVCVVGLFGNFLVMY) traverse the membrane as a helical segment. Residues 94-106 (VIVRYTKMKTATN) are Cytoplasmic-facing. Residues 107 to 131 (IYIFNLALADALATSTLPFQSVNYL) traverse the membrane as a helical segment. The Extracellular portion of the chain corresponds to 132-142 (MGTWPFGTILC). The cysteines at positions 142 and 219 are disulfide-linked. A helical transmembrane segment spans residues 143–165 (KIVISIDYYNMFTSIFTLCTMSV). The Cytoplasmic segment spans residues 166–185 (DRYIAVCHPVKALDFRTPRN). Residue tyrosine 168 is modified to Phosphotyrosine. Residues 186 to 207 (AKIINVCNWILSSAIGLPVMFM) traverse the membrane as a helical segment. The Extracellular segment spans residues 208-230 (ATTKYRQGSIDCTLTFSHPTWYW). The chain crosses the membrane as a helical span at residues 231 to 255 (ENLLKICVFIFAFIMPVLIITVCYG). Topologically, residues 256 to 279 (LMILRLKSVRMLSGSKEKDRNLRR) are cytoplasmic. Residues 280–306 (ITRMVLVVVAVFIVCWTPIHIYVIIKA) form a helical membrane-spanning segment. Residues 307–314 (LVTIPETT) are Extracellular-facing. Residues 315–338 (FQTVSWHFCIALGYTNSCLNPVLY) traverse the membrane as a helical segment. The short motif at 334–338 (NPVLY) is the NPxxY; plays a role in stabilizing the activated conformation of the receptor element. Residues 339–400 (AFLDENFKRC…NLEAETAPLP (62 aa)) are Cytoplasmic-facing. Residue cysteine 353 is the site of S-palmitoyl cysteine attachment. Serine 365 is modified (phosphoserine). Threonine 372 carries the phosphothreonine modification. Residue serine 377 is modified to Phosphoserine. A Phosphothreonine modification is found at threonine 396.

It belongs to the G-protein coupled receptor 1 family. Forms homooligomers and heterooligomers with other GPCRs, such as OPRD1, OPRK1, OPRL1, NPFFR2, ADRA2A, SSTR2, CNR1 and CCR5 (probably in dimeric forms). Interacts with heterotrimeric G proteins; interaction with a heterotrimeric complex containing GNAI1, GNB1 and GNG2 stabilizes the active conformation of the receptor and increases its affinity for endomorphin-2, the synthetic opioid peptide DAMGO and for morphinan agonists. Interacts with PPL; the interaction disrupts agonist-mediated G-protein activation. Interacts (via C-terminus) with DNAJB4 (via C-terminus). Interacts with calmodulin; the interaction inhibits the constitutive activity of OPRM1; it abolishes basal and attenuates agonist-stimulated G-protein coupling. Interacts with FLNA, PLD2, RANBP9 and WLS and GPM6A. Interacts with RTP4. Interacts with SYP and GNAS. Interacts with RGS9, RGS17, RGS20, RGS4, PPP1R9B and HINT1. In terms of processing, phosphorylated. Differentially phosphorylated in basal and agonist-induced conditions. Agonist-mediated phosphorylation modulates receptor internalization. Phosphorylated by GRK2 in a agonist-dependent manner. Phosphorylation at Tyr-168 requires receptor activation, is dependent on non-receptor protein tyrosine kinase Src and results in a decrease in agonist efficacy by reducing G-protein coupling efficiency. Phosphorylated on tyrosine residues; the phosphorylation is involved in agonist-induced G-protein-independent receptor down-regulation. Phosphorylation at Ser-377 is involved in G-protein-dependent but not beta-arrestin-dependent activation of the ERK pathway. Ubiquitinated. A basal ubiquitination seems not to be related to degradation. Ubiquitination is increased upon formation of OPRM1:OPRD1 oligomers leading to proteasomal degradation; the ubiquitination is diminished by RTP4. In terms of tissue distribution, expressed in brain. Isoform 16 and isoform 17 are detected in brain.

Its subcellular location is the cell membrane. It is found in the cell projection. It localises to the axon. The protein resides in the perikaryon. The protein localises to the dendrite. Its subcellular location is the endosome. It is found in the cytoplasm. Receptor for endogenous opioids such as beta-endorphin and endomorphin. Receptor for natural and synthetic opioids including morphine, heroin, DAMGO, fentanyl, etorphine, buprenorphin and methadone. Also activated by enkephalin peptides, such as Met-enkephalin or Met-enkephalin-Arg-Phe, with higher affinity for Met-enkephalin-Arg-Phe. Agonist binding to the receptor induces coupling to an inactive GDP-bound heterotrimeric G-protein complex and subsequent exchange of GDP for GTP in the G-protein alpha subunit leading to dissociation of the G-protein complex with the free GTP-bound G-protein alpha and the G-protein beta-gamma dimer activating downstream cellular effectors. The agonist- and cell type-specific activity is predominantly coupled to pertussis toxin-sensitive G(i) and G(o) G alpha proteins, GNAI1, GNAI2, GNAI3 and GNAO1 isoforms Alpha-1 and Alpha-2, and to a lesser extent to pertussis toxin-insensitive G alpha proteins GNAZ and GNA15. They mediate an array of downstream cellular responses, including inhibition of adenylate cyclase activity and both N-type and L-type calcium channels, activation of inward rectifying potassium channels, mitogen-activated protein kinase (MAPK), phospholipase C (PLC), phosphoinositide/protein kinase (PKC), phosphoinositide 3-kinase (PI3K) and regulation of NF-kappa-B. Also couples to adenylate cyclase stimulatory G alpha proteins. The selective temporal coupling to G-proteins and subsequent signaling can be regulated by RGSZ proteins, such as RGS9, RGS17 and RGS4. Phosphorylation by members of the GPRK subfamily of Ser/Thr protein kinases and association with beta-arrestins is involved in short-term receptor desensitization. Beta-arrestins associate with the GPRK-phosphorylated receptor and uncouple it from the G-protein thus terminating signal transduction. The phosphorylated receptor is internalized through endocytosis via clathrin-coated pits which involves beta-arrestins. The activation of the ERK pathway occurs either in a G-protein-dependent or a beta-arrestin-dependent manner and is regulated by agonist-specific receptor phosphorylation. Acts as a class A G-protein coupled receptor (GPCR) which dissociates from beta-arrestin at or near the plasma membrane and undergoes rapid recycling. Receptor down-regulation pathways are varying with the agonist and occur dependent or independent of G-protein coupling. Endogenous ligands induce rapid desensitization, endocytosis and recycling. Heterooligomerization with other GPCRs can modulate agonist binding, signaling and trafficking properties. Its function is as follows. Couples to GNAS and is proposed to be involved in excitatory effects. In terms of biological role, does not bind agonists but may act through oligomerization with binding-competent OPRM1 isoforms and reduce their ligand binding activity. The polypeptide is Mu-type opioid receptor (OPRM1) (Homo sapiens (Human)).